Here is a 209-residue protein sequence, read N- to C-terminus: Ion-translocating oxidoreductase complex subunit G (209 aa).

A helical membrane pass occupies residues 9 to 29 (GITLALFAAGATGLTAVVNSL). T175 is subject to FMN phosphoryl threonine.

Belongs to the RnfG family. In terms of assembly, the complex is composed of six subunits: RnfA, RnfB, RnfC, RnfD, RnfE and RnfG. Requires FMN as cofactor.

It is found in the cell inner membrane. Its function is as follows. Part of a membrane-bound complex that couples electron transfer with translocation of ions across the membrane. The protein is Ion-translocating oxidoreductase complex subunit G of Yersinia pestis.